Here is a 74-residue protein sequence, read N- to C-terminus: Translation initiation factor IF-1 (74 aa).

An S1-like domain is found at 1 to 72 (MSKEDAIEME…NKGRITYRLK (72 aa)).

The protein belongs to the IF-1 family. In terms of assembly, component of the 30S ribosomal translation pre-initiation complex which assembles on the 30S ribosome in the order IF-2 and IF-3, IF-1 and N-formylmethionyl-tRNA(fMet); mRNA recruitment can occur at any time during PIC assembly.

It is found in the cytoplasm. Its function is as follows. One of the essential components for the initiation of protein synthesis. Stabilizes the binding of IF-2 and IF-3 on the 30S subunit to which N-formylmethionyl-tRNA(fMet) subsequently binds. Helps modulate mRNA selection, yielding the 30S pre-initiation complex (PIC). Upon addition of the 50S ribosomal subunit IF-1, IF-2 and IF-3 are released leaving the mature 70S translation initiation complex. This Synechococcus sp. (strain JA-2-3B'a(2-13)) (Cyanobacteria bacterium Yellowstone B-Prime) protein is Translation initiation factor IF-1.